We begin with the raw amino-acid sequence, 254 residues long: 3-dehydroquinate dehydratase (254 aa).

3-dehydroquinate-binding positions include 47–49 (EFR) and arginine 83. Residue histidine 144 is the Proton donor/acceptor of the active site. Lysine 171 serves as the catalytic Schiff-base intermediate with substrate. 3 residues coordinate 3-dehydroquinate: arginine 213, serine 232, and glutamine 236.

This sequence belongs to the type-I 3-dehydroquinase family. As to quaternary structure, homodimer.

It carries out the reaction 3-dehydroquinate = 3-dehydroshikimate + H2O. Its pathway is metabolic intermediate biosynthesis; chorismate biosynthesis; chorismate from D-erythrose 4-phosphate and phosphoenolpyruvate: step 3/7. Its function is as follows. Involved in the third step of the chorismate pathway, which leads to the biosynthesis of aromatic amino acids. Catalyzes the cis-dehydration of 3-dehydroquinate (DHQ) and introduces the first double bond of the aromatic ring to yield 3-dehydroshikimate. The sequence is that of 3-dehydroquinate dehydratase from Neisseria meningitidis serogroup C / serotype 2a (strain ATCC 700532 / DSM 15464 / FAM18).